A 249-amino-acid chain; its full sequence is Probable transglycosylase SceD 2 (249 aa).

Positions methionine 1–alanine 27 are cleaved as a signal peptide. 2 stretches are compositionally biased toward low complexity: residues tryptophan 80–glutamate 95 and glutamine 103–serine 171. A disordered region spans residues tryptophan 80 to glutamine 203. 2 stretches are compositionally biased toward polar residues: residues glycine 172 to glutamine 182 and threonine 192 to glutamine 203.

It belongs to the transglycosylase family. SceD subfamily.

The protein localises to the secreted. In terms of biological role, is able to cleave peptidoglycan and affects clumping and separation of bacterial cells. The sequence is that of Probable transglycosylase SceD 2 (sceD2) from Staphylococcus saprophyticus subsp. saprophyticus (strain ATCC 15305 / DSM 20229 / NCIMB 8711 / NCTC 7292 / S-41).